Reading from the N-terminus, the 179-residue chain is Large ribosomal subunit protein uL5 (179 aa).

The protein belongs to the universal ribosomal protein uL5 family. As to quaternary structure, part of the 50S ribosomal subunit; part of the 5S rRNA/L5/L18/L25 subcomplex. Contacts the 5S rRNA and the P site tRNA. Forms a bridge to the 30S subunit in the 70S ribosome.

This is one of the proteins that bind and probably mediate the attachment of the 5S RNA into the large ribosomal subunit, where it forms part of the central protuberance. In the 70S ribosome it contacts protein S13 of the 30S subunit (bridge B1b), connecting the 2 subunits; this bridge is implicated in subunit movement. Contacts the P site tRNA; the 5S rRNA and some of its associated proteins might help stabilize positioning of ribosome-bound tRNAs. In Desulfovibrio desulfuricans (strain ATCC 27774 / DSM 6949 / MB), this protein is Large ribosomal subunit protein uL5.